Here is a 104-residue protein sequence, read N- to C-terminus: L-rhamnose mutarotase (104 aa).

Tyr-18 serves as a coordination point for substrate. His-22 acts as the Proton donor in catalysis. Residues Tyr-41 and 76–77 (WW) contribute to the substrate site.

This sequence belongs to the rhamnose mutarotase family. In terms of assembly, homodimer.

The protein localises to the cytoplasm. The catalysed reaction is alpha-L-rhamnose = beta-L-rhamnose. The protein operates within carbohydrate metabolism; L-rhamnose metabolism. Functionally, involved in the anomeric conversion of L-rhamnose. This chain is L-rhamnose mutarotase, found in Sinorhizobium fredii (strain NBRC 101917 / NGR234).